We begin with the raw amino-acid sequence, 300 residues long: Cathepsin B-like CP2 (300 aa).

Positions 1–19 (MKLFLLAAAAFSAPALTVS) are cleaved as a signal peptide. 3 cysteine pairs are disulfide-bonded: Cys88–Cys115, Cys98–Cys141, and Cys134–Cys177. Cys101 is an active-site residue. Active-site residues include His245 and Asn266.

This sequence belongs to the peptidase C1 family.

The protein localises to the vacuole. In terms of biological role, thiol protease which is required for parasite excystation and invasion of the proximal small intestine of the human host. This chain is Cathepsin B-like CP2 (CP2), found in Giardia intestinalis (Giardia lamblia).